The chain runs to 194 residues: A-type ATP synthase subunit E (194 aa).

It belongs to the V-ATPase E subunit family. Has multiple subunits with at least A(3), B(3), C, D, E, F, H, I and proteolipid K(x).

The protein localises to the cell membrane. In terms of biological role, component of the A-type ATP synthase that produces ATP from ADP in the presence of a proton gradient across the membrane. The protein is A-type ATP synthase subunit E of Saccharolobus solfataricus (strain ATCC 35092 / DSM 1617 / JCM 11322 / P2) (Sulfolobus solfataricus).